The following is a 175-amino-acid chain: Crossover junction endodeoxyribonuclease RuvC (175 aa).

Catalysis depends on residues D11, E71, and H143. Mg(2+) is bound by residues D11, E71, and H143.

It belongs to the RuvC family. In terms of assembly, homodimer which binds Holliday junction (HJ) DNA. The HJ becomes 2-fold symmetrical on binding to RuvC with unstacked arms; it has a different conformation from HJ DNA in complex with RuvA. In the full resolvosome a probable DNA-RuvA(4)-RuvB(12)-RuvC(2) complex forms which resolves the HJ. Mg(2+) is required as a cofactor.

The protein localises to the cytoplasm. The catalysed reaction is Endonucleolytic cleavage at a junction such as a reciprocal single-stranded crossover between two homologous DNA duplexes (Holliday junction).. Functionally, the RuvA-RuvB-RuvC complex processes Holliday junction (HJ) DNA during genetic recombination and DNA repair. Endonuclease that resolves HJ intermediates. Cleaves cruciform DNA by making single-stranded nicks across the HJ at symmetrical positions within the homologous arms, yielding a 5'-phosphate and a 3'-hydroxyl group; requires a central core of homology in the junction. The consensus cleavage sequence is 5'-(A/T)TT(C/G)-3'. Cleavage occurs on the 3'-side of the TT dinucleotide at the point of strand exchange. HJ branch migration catalyzed by RuvA-RuvB allows RuvC to scan DNA until it finds its consensus sequence, where it cleaves and resolves the cruciform DNA. In Parvibaculum lavamentivorans (strain DS-1 / DSM 13023 / NCIMB 13966), this protein is Crossover junction endodeoxyribonuclease RuvC.